The primary structure comprises 234 residues: Large ribosomal subunit protein uL1 (234 aa).

The protein belongs to the universal ribosomal protein uL1 family. In terms of assembly, part of the 50S ribosomal subunit.

Binds directly to 23S rRNA. The L1 stalk is quite mobile in the ribosome, and is involved in E site tRNA release. In terms of biological role, protein L1 is also a translational repressor protein, it controls the translation of the L11 operon by binding to its mRNA. This Campylobacter fetus subsp. fetus (strain 82-40) protein is Large ribosomal subunit protein uL1.